The following is a 458-amino-acid chain: Monomethylamine methyltransferase MtmB (458 aa).

A non-standard amino acid (pyrrolysine) is located at residue O202.

Belongs to the monomethylamine methyltransferase family. In terms of assembly, can form a complex with MtmC.

It carries out the reaction Co(I)-[methylamine-specific corrinoid protein] + methylamine + H(+) = methyl-Co(III)-[methylamine-specific corrinoid protein] + NH4(+). It functions in the pathway one-carbon metabolism; methanogenesis from methylamine. Functionally, catalyzes the transfer of the methyl group from monomethylamine to the corrinoid cofactor of MtmC. The protein is Monomethylamine methyltransferase MtmB (mtmB1) of Methanosarcina mazei (strain ATCC BAA-159 / DSM 3647 / Goe1 / Go1 / JCM 11833 / OCM 88) (Methanosarcina frisia).